Here is a 206-residue protein sequence, read N- to C-terminus: Ribosomal RNA large subunit methyltransferase E (206 aa).

S-adenosyl-L-methionine-binding residues include Gly-60, Trp-62, Asp-80, Asp-96, and Asp-121. Residue Lys-161 is the Proton acceptor of the active site.

It belongs to the class I-like SAM-binding methyltransferase superfamily. RNA methyltransferase RlmE family.

Its subcellular location is the cytoplasm. The catalysed reaction is uridine(2552) in 23S rRNA + S-adenosyl-L-methionine = 2'-O-methyluridine(2552) in 23S rRNA + S-adenosyl-L-homocysteine + H(+). Functionally, specifically methylates the uridine in position 2552 of 23S rRNA at the 2'-O position of the ribose in the fully assembled 50S ribosomal subunit. This chain is Ribosomal RNA large subunit methyltransferase E, found in Legionella pneumophila (strain Corby).